Consider the following 158-residue polypeptide: NAD(P)H-quinone oxidoreductase subunit N (158 aa).

It belongs to the complex I NdhN subunit family. In terms of assembly, NDH-1 can be composed of about 15 different subunits; different subcomplexes with different compositions have been identified which probably have different functions.

The protein localises to the cellular thylakoid membrane. The enzyme catalyses a plastoquinone + NADH + (n+1) H(+)(in) = a plastoquinol + NAD(+) + n H(+)(out). It catalyses the reaction a plastoquinone + NADPH + (n+1) H(+)(in) = a plastoquinol + NADP(+) + n H(+)(out). Functionally, NDH-1 shuttles electrons from an unknown electron donor, via FMN and iron-sulfur (Fe-S) centers, to quinones in the respiratory and/or the photosynthetic chain. The immediate electron acceptor for the enzyme in this species is believed to be plastoquinone. Couples the redox reaction to proton translocation, and thus conserves the redox energy in a proton gradient. Cyanobacterial NDH-1 also plays a role in inorganic carbon-concentration. The sequence is that of NAD(P)H-quinone oxidoreductase subunit N from Prochlorococcus marinus (strain MIT 9215).